We begin with the raw amino-acid sequence, 224 residues long: Mammalian ependymin-related protein 1 (224 aa).

The N-terminal stretch at 1 to 37 is a signal peptide; that stretch reads MPARAPRRLVQGPRGTWLLGSLWVWVLCGLGMAGSLG. Cystine bridges form between cysteine 42/cysteine 172, cysteine 88/cysteine 222, and cysteine 113/cysteine 210. Residues asparagine 130 and asparagine 182 are each glycosylated (N-linked (GlcNAc...) asparagine).

The protein belongs to the ependymin family. As to quaternary structure, homodimer. In terms of processing, N-glycosylated; the glycan contains mannose-6-phosphate moieties. Detected in brain, small intestine and in soleus, extensor digitorum longus and white gastrocnemius (at protein level). Detected in brain and skeletal muscle, and at lower leavels in heart.

The protein resides in the lysosome lumen. It is found in the secreted. In terms of biological role, binds anionic lipids and gangliosides at acidic pH. The chain is Mammalian ependymin-related protein 1 (Epdr1) from Mus musculus (Mouse).